A 290-amino-acid chain; its full sequence is N-acetylmannosamine kinase (290 aa).

Residues 6–13 (ALDIGGTK) and 132–139 (GVGGGIIL) contribute to the ATP site. Zn(2+)-binding residues include histidine 156, cysteine 166, cysteine 168, and cysteine 173.

It belongs to the ROK (NagC/XylR) family. NanK subfamily. As to quaternary structure, homodimer.

It catalyses the reaction an N-acyl-D-mannosamine + ATP = an N-acyl-D-mannosamine 6-phosphate + ADP + H(+). It participates in amino-sugar metabolism; N-acetylneuraminate degradation; D-fructose 6-phosphate from N-acetylneuraminate: step 2/5. Catalyzes the phosphorylation of N-acetylmannosamine (ManNAc) to ManNAc-6-P. The protein is N-acetylmannosamine kinase of Yersinia pseudotuberculosis serotype O:3 (strain YPIII).